The following is a 729-amino-acid chain: Fatty acid oxidation complex subunit alpha (729 aa).

The enoyl-CoA hydratase/isomerase stretch occupies residues 1–189 (MLYQSETLQL…KIGLVDAVVD (189 aa)). Asp-296 is a binding site for substrate. Residues 311–729 (AAPKLAAVLG…LLDVSTNQPA (419 aa)) form a 3-hydroxyacyl-CoA dehydrogenase region. NAD(+) is bound by residues Met-324, Asp-343, 400–402 (VVE), Lys-407, and Ser-429. The active-site For 3-hydroxyacyl-CoA dehydrogenase activity is the His-450. Position 453 (Asn-453) interacts with NAD(+). Residues Asn-500 and Tyr-660 each coordinate substrate.

This sequence in the N-terminal section; belongs to the enoyl-CoA hydratase/isomerase family. It in the C-terminal section; belongs to the 3-hydroxyacyl-CoA dehydrogenase family. Heterotetramer of two alpha chains (FadB) and two beta chains (FadA).

The enzyme catalyses a (3S)-3-hydroxyacyl-CoA + NAD(+) = a 3-oxoacyl-CoA + NADH + H(+). It catalyses the reaction a (3S)-3-hydroxyacyl-CoA = a (2E)-enoyl-CoA + H2O. The catalysed reaction is a 4-saturated-(3S)-3-hydroxyacyl-CoA = a (3E)-enoyl-CoA + H2O. It carries out the reaction (3S)-3-hydroxybutanoyl-CoA = (3R)-3-hydroxybutanoyl-CoA. The enzyme catalyses a (3Z)-enoyl-CoA = a 4-saturated (2E)-enoyl-CoA. It catalyses the reaction a (3E)-enoyl-CoA = a 4-saturated (2E)-enoyl-CoA. The protein operates within lipid metabolism; fatty acid beta-oxidation. Functionally, involved in the aerobic and anaerobic degradation of long-chain fatty acids via beta-oxidation cycle. Catalyzes the formation of 3-oxoacyl-CoA from enoyl-CoA via L-3-hydroxyacyl-CoA. It can also use D-3-hydroxyacyl-CoA and cis-3-enoyl-CoA as substrate. This chain is Fatty acid oxidation complex subunit alpha, found in Yersinia pseudotuberculosis serotype O:1b (strain IP 31758).